The primary structure comprises 170 residues: Large ribosomal subunit protein uL22z (170 aa).

This sequence belongs to the universal ribosomal protein uL22 family.

The chain is Large ribosomal subunit protein uL22z from Hordeum vulgare (Barley).